Reading from the N-terminus, the 471-residue chain is dTDP-4-dehydro-6-deoxy-alpha-D-glucopyranose 2,3-dehydratase (471 aa).

DTDP-4-dehydro-6-deoxy-alpha-D-glucose contacts are provided by residues tryptophan 67, 155–159, serine 193, asparagine 238, tryptophan 288, arginine 351, 367–369, 372–373, and 405–408; these read TRSNY, QCT, NY, and EGGR.

This sequence belongs to the hexose 2,3-dehydratase family. As to quaternary structure, homodimer.

The enzyme catalyses dTDP-4-dehydro-6-deoxy-alpha-D-glucose = dTDP-3,4-didehydro-2,6-dideoxy-alpha-D-glucose + H2O. It functions in the pathway antibiotic biosynthesis. In terms of biological role, involved in the biosynthesis of the 2,3,6-trideoxysugar L-epivancosamine, the terminal sugar added to the aglycone scaffold of chloroeremomycin, a member of the glycopeptide antibiotics vancomycin family. Catalyzes the removal of the hydroxyl group at position C-2 of the hexose ring of dTDP-4-dehydro-6-deoxy-alpha-D-glucopyranose, and the oxidation of the hydroxyl group at position C-3 to form a carbonyl functionality. The product of the reaction, dTDP-2,6-dideoxy-D-glycero-hex-2-enos-4-ulose, is a highly unstable diketosugar, which spontaneously forms dTDP-3,4-didehydro-2,6-dideoxy-alpha-D-glucose. This chain is dTDP-4-dehydro-6-deoxy-alpha-D-glucopyranose 2,3-dehydratase, found in Amycolatopsis orientalis (Nocardia orientalis).